The primary structure comprises 389 residues: Chalcone synthase 3 (389 aa).

C164 is an active-site residue.

Belongs to the thiolase-like superfamily. Chalcone/stilbene synthases family.

It carries out the reaction (E)-4-coumaroyl-CoA + 3 malonyl-CoA + 3 H(+) = 2',4,4',6'-tetrahydroxychalcone + 3 CO2 + 4 CoA. It participates in secondary metabolite biosynthesis; flavonoid biosynthesis. Functionally, the primary product of this enzyme is 4,2',4',6'-tetrahydroxychalcone (also termed naringenin-chalcone or chalcone) which can under specific conditions spontaneously isomerize into naringenin. The polypeptide is Chalcone synthase 3 (CHS3) (Camellia sinensis (Tea plant)).